Here is an 880-residue protein sequence, read N- to C-terminus: MTLLTSSLLLFSLLTSRLEAIPVLEKSPAHPAHSAHTAHPAHPSPGVRILRAPESLVAPLGDEVVLECETSLQPERFEWSHRSSRSPGAGFKYLRTGTAKANVSQEAAISRLRVLVRPDTLGEYRCVGWFGPLVVTSTTARLELASTSLVDAQESEAPLQWRVSAGNSVLWSCGQQVQSNPSASWSYFRNGVEIKPEFIGTNGNLFLSNVSSESSGIYSCQATNPASGERIQLPGSMQLQVTPEQRSQSKSPHLLKGQPSSQEITIREGSSLLLQCPGVGSPPPTVVWSSPDVVGAVKNKRSKVFGHALEISNTRVHDAGTYICFQDNGVRPALEHYIKVHVEQPPQIVRPPWADLTNEGDRLKLECEATGVPTPEIYWLLNGHSSVDDTEAELSNNFLILHSVLKRHAGYVQCFARNRLGEHSAGTLLQVNPKQIQEPRESGGTHRPKPNQGSKQKQMYPPTPPNVTRLSDESVMLRWMVPRNGGLPIVIFKVQYRMVGKRKNWQTTNDNIPYGKPKWNSELGKSFTASVTDLKPEHTYRFRILAVYSNNDNKESNTSAKFYLQPGAALDPMPVPELLEIEEYSETAVVLHWSLASDADEHLITGYYAYYRPSSSAGEYFKATIEGAHARSFKIAPLETATMYEFKLQSFSAVSASEFSALKQGRTQRPKTSTTEEPTLQMGDRDTTTPSHNETFNMSPMLTGTIGGGAVLILLLISTCLCVCRRRTSRSRGNNPNKPRMAELRDDFVPLGNCSPTKQRQRTRHIHITLNPLAQQQQQALEEKNDTDQDAPYYQRPSSYDYDPTLRRMSSSSLRRSQRTLERAGGSNGSNNGNNNNLNQSAEAGAVENPGKPGRVLMKRPRLSSRSENLSSGSLNSVGV.

The signal sequence occupies residues 1–20 (MTLLTSSLLLFSLLTSRLEA). At 21–703 (IPVLEKSPAH…ETFNMSPMLT (683 aa)) the chain is on the extracellular side. Ig-like C2-type domains are found at residues 45–142 (PGVR…TARL), 132–232 (PLVV…ERIQ), 252–340 (PHLL…YIKV), and 346–432 (PQIV…LQVN). 4 disulfides stabilise this stretch: Cys-68–Cys-126, Cys-173–Cys-220, Cys-276–Cys-324, and Cys-367–Cys-414. N-linked (GlcNAc...) asparagine glycosylation is found at Asn-102 and Asn-209. The segment at 426–467 (GTLLQVNPKQIQEPRESGGTHRPKPNQGSKQKQMYPPTPPNV) is disordered. 2 Fibronectin type-III domains span residues 461–567 (PPTP…LQPG) and 575–670 (VPEL…TQRP). Asn-466 carries an N-linked (GlcNAc...) asparagine glycan. 4 residues coordinate heparin: Arg-497, Lys-501, Lys-503, and Arg-541. N-linked (GlcNAc...) asparagine glycosylation is present at Asn-557. Residues 662–697 (LKQGRTQRPKTSTTEEPTLQMGDRDTTTPSHNETFN) are disordered. Polar residues-rich tracts occupy residues 665 to 678 (GRTQ…TEEP) and 688 to 697 (TTPSHNETFN). N-linked (GlcNAc...) asparagine glycosylation is present at Asn-693. Residues 704 to 724 (GTIGGGAVLILLLISTCLCVC) traverse the membrane as a helical segment. The Cytoplasmic portion of the chain corresponds to 725–880 (RRRTSRSRGN…SSGSLNSVGV (156 aa)). Disordered regions lie at residues 728–762 (TSRS…QRQR) and 775–880 (QQQQ…SVGV). Composition is skewed to low complexity over residues 823–837 (RAGG…NNNN) and 864–880 (SSRS…SVGV).

The protein belongs to the immunoglobulin superfamily. IHOG family. Homodimer. Heterotetramer; 2 iHog chains bind 2 hh chains when facilitated by heparin, heparin is required to promote high-affinity interactions between hh and iHog.

The protein resides in the membrane. Mediates response to the active Hedgehog (Hh) protein signal in embryos, functioning upstream or at the level of patched (ptc). The chain is Interference hedgehog from Drosophila sechellia (Fruit fly).